The chain runs to 182 residues: Small ribosomal subunit protein uS4c (182 aa).

A disordered region spans residues 13–32 (GLTSKRPRSGSDLKNPLRSG). An S4 RNA-binding domain is found at 82-143 (MRLDNILFRL…KQRSKALIQN (62 aa)).

The protein belongs to the universal ribosomal protein uS4 family. In terms of assembly, part of the 30S ribosomal subunit. Contacts protein S5. The interaction surface between S4 and S5 is involved in control of translational fidelity.

It is found in the plastid. It localises to the chloroplast. Functionally, one of the primary rRNA binding proteins, it binds directly to 16S rRNA where it nucleates assembly of the body of the 30S subunit. With S5 and S12 plays an important role in translational accuracy. The protein is Small ribosomal subunit protein uS4c (rps4) of Scadoxus puniceus (Paintbrush lily).